The primary structure comprises 276 residues: MAQGSPATVAACAFCGARRTRSGMVLSTSAADGYLDDEAQFETALRLLPAADQAAVRRRRAGRAVVLASRLLRTLGCAVHTGCAPALLAFDYSRAGKPYLRSRPAPAFSVSRSDCIAVIYVREGGAVGADLASVAECLSWAPDEILQLHDVFSAAELGRLRAAAPGRARAELFAYYWSLKEAYGKFRGTGLAGDLRLADMGELDPLRRGELRTLRRTLQGKHVCLSSRWHDAGHVLSLCEAREPSPTEEICLHKVPMEEVVRLCRPSLGMEKCHVR.

The protein belongs to the P-Pant transferase superfamily. AcpS family.

The enzyme catalyses apo-[ACP] + CoA = holo-[ACP] + adenosine 3',5'-bisphosphate + H(+). Its function is as follows. Catalyzes the transfer of a 4'-phosphopantetheine moiety from coenzyme A to a serine residue of acceptor proteins, such as alpha-aminoadipate reductase. Necessary for alpha-aminoadipate reductase activity. This is L-aminoadipate-semialdehyde dehydrogenase-phosphopantetheinyl transferase (LYS5) from Eremothecium gossypii (strain ATCC 10895 / CBS 109.51 / FGSC 9923 / NRRL Y-1056) (Yeast).